The primary structure comprises 138 residues: Large ribosomal subunit protein bL17 (138 aa).

Residues 118 to 138 (RDEDAKGKDSGPSQDGAAEAA) form a disordered region.

The protein belongs to the bacterial ribosomal protein bL17 family. Part of the 50S ribosomal subunit. Contacts protein L32.

The polypeptide is Large ribosomal subunit protein bL17 (Rhodopseudomonas palustris (strain HaA2)).